Consider the following 233-residue polypeptide: Putative N-acetylmannosamine-6-phosphate 2-epimerase (233 aa).

The protein belongs to the NanE family.

The catalysed reaction is an N-acyl-D-glucosamine 6-phosphate = an N-acyl-D-mannosamine 6-phosphate. Its pathway is amino-sugar metabolism; N-acetylneuraminate degradation; D-fructose 6-phosphate from N-acetylneuraminate: step 3/5. Functionally, converts N-acetylmannosamine-6-phosphate (ManNAc-6-P) to N-acetylglucosamine-6-phosphate (GlcNAc-6-P). This Yersinia pseudotuberculosis serotype IB (strain PB1/+) protein is Putative N-acetylmannosamine-6-phosphate 2-epimerase.